A 225-amino-acid polypeptide reads, in one-letter code: Urease accessory protein UreG 2 (225 aa).

31 to 38 contacts GTP; the sequence is GPVGSGKT.

This sequence belongs to the SIMIBI class G3E GTPase family. UreG subfamily. In terms of assembly, homodimer. UreD, UreF and UreG form a complex that acts as a GTP-hydrolysis-dependent molecular chaperone, activating the urease apoprotein by helping to assemble the nickel containing metallocenter of UreC. The UreE protein probably delivers the nickel.

It is found in the cytoplasm. Facilitates the functional incorporation of the urease nickel metallocenter. This process requires GTP hydrolysis, probably effectuated by UreG. The sequence is that of Urease accessory protein UreG 2 from Streptomyces griseus subsp. griseus (strain JCM 4626 / CBS 651.72 / NBRC 13350 / KCC S-0626 / ISP 5235).